The chain runs to 395 residues: Chalcone synthase 3 (395 aa).

V2 carries the post-translational modification N-acetylvaline. C169 is a catalytic residue.

It belongs to the thiolase-like superfamily. Chalcone/stilbene synthases family.

It carries out the reaction (E)-4-coumaroyl-CoA + 3 malonyl-CoA + 3 H(+) = 2',4,4',6'-tetrahydroxychalcone + 3 CO2 + 4 CoA. Its pathway is secondary metabolite biosynthesis; flavonoid biosynthesis. The primary product of this enzyme is 4,2',4',6'-tetrahydroxychalcone (also termed naringenin-chalcone or chalcone) which can under specific conditions spontaneously isomerize into naringenin. This is Chalcone synthase 3 (CHS3) from Sinapis alba (White mustard).